An 83-amino-acid polypeptide reads, in one-letter code: Small ribosomal subunit protein bS16 (83 aa).

It belongs to the bacterial ribosomal protein bS16 family.

This Shewanella baltica (strain OS223) protein is Small ribosomal subunit protein bS16.